Reading from the N-terminus, the 333-residue chain is Protein amalgam (333 aa).

A signal peptide spans 1–23; it reads MARLRLLIGLIFCLAISLDSVLS. One can recognise an Ig-like V-type domain in the interval 25–128; sequence PVISQISKDV…VLVSATEKVT (104 aa). Asparagine 45 and asparagine 86 each carry an N-linked (GlcNAc...) asparagine glycan. Disulfide bonds link cysteine 46–cysteine 117, cysteine 161–cysteine 208, and cysteine 251–cysteine 307. Ig-like C2-type domains follow at residues 139–223 and 230–323; these read PVIA…RLIR and PQIA…LHLF. Residue asparagine 308 is glycosylated (N-linked (GlcNAc...) asparagine).

It is found in the cell membrane. In Drosophila melanogaster (Fruit fly), this protein is Protein amalgam (Ama).